Reading from the N-terminus, the 170-residue chain is Transcription factor E (170 aa).

In terms of domain architecture, HTH TFE/IIEalpha-type spans 1–93 (MKEAYLYIVE…TWYVDDEIIR (93 aa)).

Belongs to the TFE family. In terms of assembly, monomer. Interaction with RNA polymerase subunits RpoF and RpoE is necessary for Tfe stimulatory transcription activity. Able to interact with Tbp and RNA polymerase in the absence of DNA promoter. Interacts both with the preinitiation and elongation complexes.

Its function is as follows. Transcription factor that plays a role in the activation of archaeal genes transcribed by RNA polymerase. Facilitates transcription initiation by enhancing TATA-box recognition by TATA-box-binding protein (Tbp), and transcription factor B (Tfb) and RNA polymerase recruitment. Not absolutely required for transcription in vitro, but particularly important in cases where Tbp or Tfb function is not optimal. It dynamically alters the nucleic acid-binding properties of RNA polymerases by stabilizing the initiation complex and destabilizing elongation complexes. Seems to translocate with the RNA polymerase following initiation and acts by binding to the non template strand of the transcription bubble in elongation complexes. This chain is Transcription factor E, found in Pyrobaculum islandicum (strain DSM 4184 / JCM 9189 / GEO3).